Here is a 304-residue protein sequence, read N- to C-terminus: Glycine--tRNA ligase alpha subunit (304 aa).

The protein belongs to the class-II aminoacyl-tRNA synthetase family. Tetramer of two alpha and two beta subunits.

The protein resides in the cytoplasm. It catalyses the reaction tRNA(Gly) + glycine + ATP = glycyl-tRNA(Gly) + AMP + diphosphate. This is Glycine--tRNA ligase alpha subunit from Afipia carboxidovorans (strain ATCC 49405 / DSM 1227 / KCTC 32145 / OM5) (Oligotropha carboxidovorans).